Reading from the N-terminus, the 307-residue chain is Protease HtpX homolog (307 aa).

The next 2 helical transmembrane spans lie at 10 to 30 and 40 to 60; these read VITI…AYGL and ISII…QWLV. Histidine 144 is a binding site for Zn(2+). Glutamate 145 is a catalytic residue. Histidine 148 contributes to the Zn(2+) binding site. 2 helical membrane-spanning segments follow: residues 156–176 and 187–207; these read LLLA…SMIF and FFLV…MILG. Glutamate 213 is a Zn(2+) binding site.

This sequence belongs to the peptidase M48B family. Requires Zn(2+) as cofactor.

It localises to the cell membrane. The polypeptide is Protease HtpX homolog (Picrophilus torridus (strain ATCC 700027 / DSM 9790 / JCM 10055 / NBRC 100828 / KAW 2/3)).